The sequence spans 240 residues: U1 small nuclear ribonucleoprotein C (240 aa).

A Matrin-type zinc finger spans residues 4 to 36; that stretch reads YYCEYCDIYLTHSSPVGRRQHIQGRKHISAKIE. 2 disordered regions span residues 86-122 and 175-240; these read GMKH…SKYH and IDSD…SVDA. Composition is skewed to basic and acidic residues over residues 178 to 194 and 203 to 219; these read DPVK…DNAI and DQGD…HADH. Over residues 226–240 the composition is skewed to polar residues; the sequence is TDGTANGNDQVSVDA.

The protein belongs to the U1 small nuclear ribonucleoprotein C family. As to quaternary structure, U1 snRNP is composed of the 7 core Sm proteins B/B', D1, D2, D3, E, F and G that assemble in a heptameric protein ring on the Sm site of the small nuclear RNA to form the core snRNP, and at least 3 U1 snRNP-specific proteins U1-70K, U1-A and U1-C. U1-C interacts with U1 snRNA and the 5' splice-site region of the pre-mRNA.

The protein resides in the nucleus. Its function is as follows. Component of the spliceosomal U1 snRNP, which is essential for recognition of the pre-mRNA 5' splice-site and the subsequent assembly of the spliceosome. U1-C is directly involved in initial 5' splice-site recognition for both constitutive and regulated alternative splicing. The interaction with the 5' splice-site seems to precede base-pairing between the pre-mRNA and the U1 snRNA. Stimulates commitment or early (E) complex formation by stabilizing the base pairing of the 5' end of the U1 snRNA and the 5' splice-site region. The sequence is that of U1 small nuclear ribonucleoprotein C from Plasmodium vivax (strain Salvador I).